The sequence spans 165 residues: Putative ankyrin repeat domain-containing protein 20A5 (165 aa).

ANK repeat units follow at residues 66–95 (QHRT…QIDI), 99–128 (ENRT…NPNL), and 132–161 (YGNT…NIEA).

The chain is Putative ankyrin repeat domain-containing protein 20A5 (ANKRD20A5P) from Homo sapiens (Human).